A 788-amino-acid polypeptide reads, in one-letter code: ATP-dependent 6-phosphofructokinase, platelet type (788 aa).

Met-1 is modified (N-acetylmethionine). The interval 1-399 (MSDQDSSTSS…NLNTYKRLAI (399 aa)) is N-terminal catalytic PFK domain 1. Phosphoserine is present on residues Ser-2, Ser-6, Ser-12, and Ser-21. Residues Gly-34, 97–98 (RC), and 127–130 (GDGS) contribute to the ATP site. Asp-128 provides a ligand contact to Mg(2+). A Phosphoserine modification is found at Ser-142. Substrate contacts are provided by residues 173–175 (SID), Arg-210, 217–219 (MGR), Glu-273, Arg-301, and 307–310 (HVQR). The active-site Proton acceptor is Asp-175. The residue at position 386 (Ser-386) is a Phosphoserine. At Lys-395 the chain carries N6-acetyllysine. The interval 400–411 (KEPDDKIPKSNC) is interdomain linker. Positions 412–788 (NVAIINVGAP…VHNHGELSAI (377 aa)) are C-terminal regulatory PFK domain 2. Arg-481 provides a ligand contact to beta-D-fructose 2,6-bisphosphate. Position 486 is an N6-acetyllysine (Lys-486). Beta-D-fructose 2,6-bisphosphate contacts are provided by residues 538–542 (TVSNN), Arg-576, 583–585 (MGG), and Glu-639. Ser-540 carries O-linked (GlcNAc) serine glycosylation. Residue Tyr-651 is modified to Phosphotyrosine. Residues Arg-665 and 671–674 (HMQQ) contribute to the beta-D-fructose 2,6-bisphosphate site. Lys-688 is subject to N6-acetyllysine. Residue Arg-744 participates in beta-D-fructose 2,6-bisphosphate binding.

The protein belongs to the phosphofructokinase type A (PFKA) family. ATP-dependent PFK group I subfamily. Eukaryotic two domain clade 'E' sub-subfamily. Homo- and heterotetramers. Phosphofructokinase (PFK) enzyme functions as a tetramer composed of different combinations of 3 types of subunits, called PFKM (M), PFKL (L) and PFKP (P). The composition of the PFK tetramer differs according to the tissue type it is present in. The kinetic and regulatory properties of the tetrameric enzyme are dependent on the subunit composition, hence can vary across tissues. Interacts with ATG4B; promoting phosphorylation of ATG4B. It depends on Mg(2+) as a cofactor. Post-translationally, glcNAcylation decreases enzyme activity. In terms of processing, phosphorylation at Ser-386 promotes interaction with ATG4B. In terms of tissue distribution, expressed at high level in neuroendocrine tissues.

Its subcellular location is the cytoplasm. The catalysed reaction is beta-D-fructose 6-phosphate + ATP = beta-D-fructose 1,6-bisphosphate + ADP + H(+). It participates in carbohydrate degradation; glycolysis; D-glyceraldehyde 3-phosphate and glycerone phosphate from D-glucose: step 3/4. With respect to regulation, allosterically activated by ADP, AMP, or fructose 2,6-bisphosphate, and allosterically inhibited by ATP or citrate. In terms of biological role, catalyzes the phosphorylation of D-fructose 6-phosphate to fructose 1,6-bisphosphate by ATP, the first committing step of glycolysis. The chain is ATP-dependent 6-phosphofructokinase, platelet type (Pfkp) from Rattus norvegicus (Rat).